The chain runs to 398 residues: Candidapepsin-2 (398 aa).

An N-terminal signal peptide occupies residues 1-18; that stretch reads MFLKNIFIGLAIALLVDA. A propeptide spans 19 to 56 (activation peptide); the sequence is TPTTTKRSAGFVALDFSVVKTPKAFPVTNGQEGKTSKR. The Peptidase A1 domain occupies 70 to 384; it reads YAADITVGSN…DLDNNEISLA (315 aa). Asp88 is a catalytic residue. 88-90 is a binding site for pepstatin A; the sequence is DTG. A disulfide bridge links Cys103 with Cys115. Pepstatin A contacts are provided by residues 141 to 142 and 274 to 278; these read GD and DSGTT. Residue Asp274 is part of the active site. Cys312 and Cys350 are joined by a disulfide. 2 N-linked (GlcNAc...) asparagine glycosylation sites follow: Asn313 and Asn321.

Belongs to the peptidase A1 family. In terms of assembly, monomer. O-glycosylated.

The protein resides in the secreted. It catalyses the reaction Preferential cleavage at the carboxyl of hydrophobic amino acids, but fails to cleave 15-Leu-|-Tyr-16, 16-Tyr-|-Leu-17 and 24-Phe-|-Phe-25 of insulin B chain. Activates trypsinogen, and degrades keratin.. The protein is Candidapepsin-2 (SAP2) of Candida albicans (strain WO-1) (Yeast).